We begin with the raw amino-acid sequence, 381 residues long: MKLIRKYHMIPYENGSEYESAKRFLENILSASDVDPTTKCRFYQDVLYRIRNHPELPIVTEELFDVVQENLQQQNDNQKRNVKLERRNLKYEVIPEKRESYQEKDYTNPPVYKAENEQLFDDVPYRNDGINHLKPRKNVYIKEEPEDEDYHMEYEKIPEINMEQNVNELFTEPQKHAAGKIKKSKNQKKDGTLSRPLGKKENKSVVKVKIEEPDQDMQAAPPRKPEEKNEETAPVSIKKRSFQQDATSNKRQKFDLKRGKSMNNVKPRKLYKMQLDEEDEDEEPMVDETPQNTEISIKKRPFQQDSTKNLNKRQKFDLKRRKNMSRVRPNKIYKMQNLKRNISSTIPDNGTNIPAAKRRVLRGSGSAPPPGSRVYCRLWKF.

The disordered stretch occupies residues 176–292 (HAAGKIKKSK…EPMVDETPQN (117 aa)). Residues 177–186 (AAGKIKKSKN) are compositionally biased toward basic residues. Residues 187–212 (QKKDGTLSRPLGKKENKSVVKVKIEE) show a composition bias toward basic and acidic residues. The segment covering 276 to 286 (DEEDEDEEPMV) has biased composition (acidic residues).

This is an uncharacterized protein from Caenorhabditis elegans.